Here is a 286-residue protein sequence, read N- to C-terminus: Glycine--tRNA ligase alpha subunit (286 aa).

Belongs to the class-II aminoacyl-tRNA synthetase family. In terms of assembly, tetramer of two alpha and two beta subunits.

Its subcellular location is the cytoplasm. It catalyses the reaction tRNA(Gly) + glycine + ATP = glycyl-tRNA(Gly) + AMP + diphosphate. In Campylobacter concisus (strain 13826), this protein is Glycine--tRNA ligase alpha subunit.